The sequence spans 467 residues: Putative laccase-16 (467 aa).

3 Plastocyanin-like domains span residues 7-88 (VLGS…PKHG), 98-225 (KEIP…YTDS), and 318-451 (DFPN…KDGK). Positions 22, 24, 67, and 69 each coordinate Cu cation. Cu cation-binding residues include His368, His371, His373, His430, Cys431, His432, His436, and Met441.

It belongs to the multicopper oxidase family. Cu cation is required as a cofactor.

It localises to the secreted. The protein localises to the extracellular space. Its subcellular location is the apoplast. It catalyses the reaction 4 hydroquinone + O2 = 4 benzosemiquinone + 2 H2O. Lignin degradation and detoxification of lignin-derived products. This is Putative laccase-16 (LAC16) from Oryza sativa subsp. japonica (Rice).